Here is a 418-residue protein sequence, read N- to C-terminus: MEEVPPYSLSSTLFQQEEQSGVTYRIPALLYLPPTHTFLAFAEKRTSVRDEDAACLVLRRGLMKGRSVQWGPQRLLMEATLPGHRTMNPCPVWEKNTGRVYLFFICVRGHVTERCQIVWGKNAARLCFLCSEDAGCSWGEVKDLTEEVIGSEVKRWATFAVGPGHGIQLHSGRLIIPAYAYYVSRWFLCFACSVKPHSLMIYSDDFGVTWHHGKFIEPQVTGECQVAEVAGTAGNPVLYCSARTPSRFRAEAFSTDSGGCFQKPTLNPQLHEPRTGCQGSVVSFRPLKMPNTYQDSIGKGAPATQKCPLLDSPLEVEKGAETPSATWLLYSHPTSKRKRINLGIYYNRNPLEVNCWSRPWILNRGPSGYSDLAVVEEQDLVACLFECGEKNEYERIDFCLFSDHEVLSCEDCTSPSSD.

The short motif at Tyr24–Pro27 is the FRIP motif element. Substrate is bound by residues Arg25 and Arg45. The active-site Proton acceptor is the Asp50. The BNR 1 repeat unit spans residues Leu129–Glu140. Substrate contacts are provided by Tyr179 and Tyr181. A BNR 2 repeat occupies Ser203–Lys214. Positions 223 and 243 each coordinate substrate. The stretch at Ser254 to Thr265 is one BNR 3 repeat. Ser312 is modified (phosphoserine). Arg339 provides a ligand contact to substrate. The Nucleophile role is filled by Tyr369. Glu386 is an active-site residue.

Belongs to the glycosyl hydrolase 33 family. In terms of assembly, interacts with CAV1; this interaction enhances NEU3 sialidase activity within caveola. Interacts with EGFR; this interaction mediates desialylation of EGFR and enhances downstream signaling. In terms of processing, palmitoylated; may regulate intracellular trafficking and anchorage to plasma membrane and endomembranes. Expressed in heart, brain and cerebral cortex.

The protein resides in the cell membrane. It localises to the membrane. It is found in the caveola. Its subcellular location is the early endosome membrane. The protein localises to the recycling endosome membrane. The protein resides in the lysosome membrane. The enzyme catalyses Hydrolysis of alpha-(2-&gt;3)-, alpha-(2-&gt;6)-, alpha-(2-&gt;8)- glycosidic linkages of terminal sialic acid residues in oligosaccharides, glycoproteins, glycolipids, colominic acid and synthetic substrates.. The catalysed reaction is a ganglioside GD1a + H2O = a ganglioside GM1 + N-acetylneuraminate. It carries out the reaction a ganglioside GD1a (d18:1(4E)) + H2O = a ganglioside GM1 (d18:1(4E)) + N-acetylneuraminate. It catalyses the reaction a ganglioside GD1b + H2O = a ganglioside GM1 + N-acetylneuraminate. The enzyme catalyses a ganglioside GD1b (d18:1(4E)) + H2O = a ganglioside GM1 (d18:1(4E)) + N-acetylneuraminate. The catalysed reaction is a ganglioside GD3 + H2O = a ganglioside GM3 + N-acetylneuraminate. It carries out the reaction a ganglioside GD3 (d18:1(4E)) + H2O = a ganglioside GM3 (d18:1(4E)) + N-acetylneuraminate. It catalyses the reaction a ganglioside GM3 + H2O = a beta-D-galactosyl-(1-&gt;4)-beta-D-glucosyl-(1&lt;-&gt;1)-ceramide + N-acetylneuraminate. The enzyme catalyses a ganglioside GM1 + H2O = a ganglioside GA1 + N-acetylneuraminate. The catalysed reaction is a ganglioside GM1 (d18:1(4E)) + H2O = a ganglioside GA1 (d18:1(4E)) + N-acetylneuraminate. It carries out the reaction a ganglioside GM2 (d18:1(4E)) + H2O = a ganglioside GA2 (d18:1(4E)) + N-acetylneuraminate. It catalyses the reaction a ganglioside GM3 (d18:1(4E)) + H2O = a beta-D-Gal-(1-&gt;4)-beta-D-Glc-(1&lt;-&gt;1)-Cer(d18:1(4E)) + N-acetylneuraminate. The enzyme catalyses a ganglioside GT1b + H2O = a ganglioside GD1b + N-acetylneuraminate. In terms of biological role, exo-alpha-sialidase that catalyzes the hydrolytic cleavage of the terminal sialic acid (N-acetylneuraminic acid, Neu5Ac) of a glycan moiety in the catabolism of glycolipids, glycoproteins and oligosacharides. Displays high catalytic efficiency for gangliosides including alpha-(2-&gt;3)-sialylated GD1a and GM3 and alpha-(2-&gt;8)-sialylated GD3. Plays a role in the regulation of transmembrane signaling through the modulation of ganglioside content of the lipid bilayer and by direct interaction with signaling receptors, such as EGFR. Desialylates EGFR and activates downstream signaling in proliferating cells. Contributes to clathrin-mediated endocytosis by regulating sorting of endocytosed receptors to early and recycling endosomes. In Mus musculus (Mouse), this protein is Sialidase-3 (Neu3).